We begin with the raw amino-acid sequence, 72 residues long: Large ribosomal subunit protein bL32 (72 aa).

The protein belongs to the bacterial ribosomal protein bL32 family.

The sequence is that of Large ribosomal subunit protein bL32 from Dehalococcoides mccartyi (strain ATCC BAA-2266 / KCTC 15142 / 195) (Dehalococcoides ethenogenes (strain 195)).